Here is a 542-residue protein sequence, read N- to C-terminus: Beta-fructofuranosidase, insoluble isoenzyme 5 (542 aa).

Substrate contacts are provided by residues 50 to 53 (WQND), glutamine 69, tryptophan 77, and 114 to 115 (WS). Residue aspartate 53 is part of the active site. N-linked (GlcNAc...) asparagine glycosylation occurs at asparagine 142. Substrate-binding positions include 178 to 179 (RD) and glutamate 233. Cysteine 389 and cysteine 436 are joined by a disulfide. Asparagine 510 and asparagine 516 each carry an N-linked (GlcNAc...) asparagine glycan.

The protein belongs to the glycosyl hydrolase 32 family. As to expression, expressed in roots and leaves.

The protein resides in the secreted. It is found in the extracellular space. Its subcellular location is the apoplast. The protein localises to the cell wall. The enzyme catalyses Hydrolysis of terminal non-reducing beta-D-fructofuranoside residues in beta-D-fructofuranosides.. In terms of biological role, may play a role in stress response. This Oryza sativa subsp. japonica (Rice) protein is Beta-fructofuranosidase, insoluble isoenzyme 5 (CIN5).